The following is a 452-amino-acid chain: Tubulin alpha-1D chain (452 aa).

Residues 1–4 (MREC) carry the MREC motif motif. Q11 provides a ligand contact to GTP. An N6-acetyllysine modification is found at K40. Residues E71, S140, G144, T145, T179, N206, and N228 each contribute to the GTP site. E71 contacts Mg(2+). E254 is an active-site residue. Y282 is modified (3'-nitrotyrosine). Residues 432 to 452 (YEEVGMDSVEGEGEEEEGDEY) form a disordered region. Residue S439 is modified to Phosphoserine. A 5-glutamyl polyglutamate modification is found at E446. The residue at position 452 (Y452) is a 3'-nitrotyrosine.

It belongs to the tubulin family. Dimer of alpha and beta chains. A typical microtubule is a hollow water-filled tube with an outer diameter of 25 nm and an inner diameter of 15 nM. Alpha-beta heterodimers associate head-to-tail to form protofilaments running lengthwise along the microtubule wall with the beta-tubulin subunit facing the microtubule plus end conferring a structural polarity. Microtubules usually have 13 protofilaments but different protofilament numbers can be found in some organisms and specialized cells. It depends on Mg(2+) as a cofactor. In terms of processing, some glutamate residues at the C-terminus are polyglycylated, resulting in polyglycine chains on the gamma-carboxyl group. Glycylation is mainly limited to tubulin incorporated into axonemes (cilia and flagella) whereas glutamylation is prevalent in neuronal cells, centrioles, axonemes, and the mitotic spindle. Both modifications can coexist on the same protein on adjacent residues, and lowering polyglycylation levels increases polyglutamylation, and reciprocally. Cilia and flagella glycylation is required for their stability and maintenance. Flagella glycylation controls sperm motility. Post-translationally, some glutamate residues at the C-terminus are polyglutamylated, resulting in polyglutamate chains on the gamma-carboxyl group. Polyglutamylation plays a key role in microtubule severing by spastin (SPAST). SPAST preferentially recognizes and acts on microtubules decorated with short polyglutamate tails: severing activity by SPAST increases as the number of glutamates per tubulin rises from one to eight, but decreases beyond this glutamylation threshold. Glutamylation is also involved in cilia motility. Acetylation of alpha chains at Lys-40 is located inside the microtubule lumen. This modification has been correlated with increased microtubule stability, intracellular transport and ciliary assembly. In terms of processing, methylation of alpha chains at Lys-40 is found in mitotic microtubules and is required for normal mitosis and cytokinesis contributing to genomic stability. Post-translationally, nitration of Tyr-452 is irreversible and interferes with normal dynein intracellular distribution. Undergoes a tyrosination/detyrosination cycle, the cyclic removal and re-addition of a C-terminal tyrosine residue by the enzymes tubulin tyrosine carboxypeptidase (MATCAP, VASH1 or VASH2) and tubulin tyrosine ligase (TTL), respectively. In terms of processing, tyrosination promotes microtubule interaction with CAP-Gly domain-containing proteins such as CLIP1, CLIP2 and DCTN1. Tyrosination regulates the initiation of dynein-dynactin motility via interaction with DCTN1, which brings the dynein-dynactin complex into contact with microtubules. In neurons, tyrosinated tubulins mediate the initiation of retrograde vesicle transport. Post-translationally, detyrosination is involved in metaphase plate congression by guiding chromosomes during mitosis: detyrosination promotes interaction with CENPE, promoting pole-proximal transport of chromosomes toward the equator. Detyrosination increases microtubules-dependent mechanotransduction in dystrophic cardiac and skeletal muscle. In cardiomyocytes, detyrosinated microtubules are required to resist to contractile compression during contraction: detyrosination promotes association with desmin (DES) at force-generating sarcomeres, leading to buckled microtubules and mechanical resistance to contraction.

It localises to the cytoplasm. The protein resides in the cytoskeleton. It carries out the reaction GTP + H2O = GDP + phosphate + H(+). Functionally, tubulin is the major constituent of microtubules, a cylinder consisting of laterally associated linear protofilaments composed of alpha- and beta-tubulin heterodimers. Microtubules grow by the addition of GTP-tubulin dimers to the microtubule end, where a stabilizing cap forms. Below the cap, tubulin dimers are in GDP-bound state, owing to GTPase activity of alpha-tubulin. In Bos taurus (Bovine), this protein is Tubulin alpha-1D chain (TUBA1D).